The sequence spans 136 residues: Holo-[acyl-carrier-protein] synthase (136 aa).

Mg(2+) is bound by residues Asp8 and Glu57.

It belongs to the P-Pant transferase superfamily. AcpS family. Requires Mg(2+) as cofactor.

It localises to the cytoplasm. It carries out the reaction apo-[ACP] + CoA = holo-[ACP] + adenosine 3',5'-bisphosphate + H(+). Functionally, transfers the 4'-phosphopantetheine moiety from coenzyme A to a Ser of acyl-carrier-protein. The sequence is that of Holo-[acyl-carrier-protein] synthase from Methylobacterium radiotolerans (strain ATCC 27329 / DSM 1819 / JCM 2831 / NBRC 15690 / NCIMB 10815 / 0-1).